The following is a 485-amino-acid chain: Adenosylhomocysteinase (485 aa).

Thr60, Asp146, and Glu208 together coordinate substrate. 209–211 (TTT) contacts NAD(+). Positions 238 and 242 each coordinate substrate. Residues Asn243, 272-277 (GYGDVG), Glu295, Asn330, 351-353 (IGH), and Asn399 each bind NAD(+).

It belongs to the adenosylhomocysteinase family. Requires NAD(+) as cofactor.

The protein localises to the cytoplasm. It catalyses the reaction S-adenosyl-L-homocysteine + H2O = L-homocysteine + adenosine. It participates in amino-acid biosynthesis; L-homocysteine biosynthesis; L-homocysteine from S-adenosyl-L-homocysteine: step 1/1. Functionally, may play a key role in the regulation of the intracellular concentration of adenosylhomocysteine. The chain is Adenosylhomocysteinase from Streptomyces griseus subsp. griseus (strain JCM 4626 / CBS 651.72 / NBRC 13350 / KCC S-0626 / ISP 5235).